The primary structure comprises 285 residues: MRSNLPLNALRAFEASARHLSFTRAALELCVTQAAVSQQVRILEDRLNRVLFKRLPRGLEMTDEAQALFAVLTDAFGQIDTIFRQFEGGEYREVLTVAAVGTFAVGWLLPRIEQFRQAHPFVELRLRTNNNVVNLAAEGLDFAIRFGNGLWPATHNEMLFEAPLTVLCTPETAQRLRRPADLLQENLLRSYRVDEWDNWFAAAGVTAERINGAVFDSSRLMVETVIHTGGAALVPAVMFARELAAGQLVRPFDIEIQMGYWLTHLKSKPMTPAMEIFRDWIVKMA.

The HTH lysR-type domain maps to 5–62; it reads LPLNALRAFEASARHLSFTRAALELCVTQAAVSQQVRILEDRLNRVLFKRLPRGLEMT. A DNA-binding region (H-T-H motif) is located at residues 22-41; that stretch reads FTRAALELCVTQAAVSQQVR.

This sequence belongs to the LysR transcriptional regulatory family.

It is found in the cytoplasm. Its function is as follows. This protein is a positive regulator of gene expression of beta-lactamase (AmpC). This is HTH-type transcriptional activator AmpR (ampR) from Citrobacter koseri (Citrobacter diversus).